The following is an 82-amino-acid chain: UPF0153 protein VC_1057 (82 aa).

This sequence belongs to the UPF0153 family.

This is UPF0153 protein VC_1057 from Vibrio cholerae serotype O1 (strain ATCC 39315 / El Tor Inaba N16961).